The chain runs to 170 residues: Putative phosphoesterase OB1230 (170 aa).

Residue H34 is the Proton donor of the active site. 2 short sequence motifs (HXTX) span residues 34-37 (HLTL) and 115-118 (HITI). Residue H115 is the Proton acceptor of the active site.

It belongs to the 2H phosphoesterase superfamily. YjcG family.

This Oceanobacillus iheyensis (strain DSM 14371 / CIP 107618 / JCM 11309 / KCTC 3954 / HTE831) protein is Putative phosphoesterase OB1230.